The chain runs to 154 residues: Iron sulfur cluster assembly protein 1, mitochondrial (154 aa).

The protein belongs to the NifU family. In terms of assembly, component of the core Fe-S cluster (ISC) assembly machinery. The cofactor is [2Fe-2S] cluster.

The protein resides in the mitochondrion matrix. The protein operates within cofactor biosynthesis; iron-sulfur cluster biosynthesis. Functionally, scaffold protein for the de novo synthesis of iron-sulfur (Fe-S) clusters within mitochondria, which is required for maturation of both mitochondrial and cytoplasmic [2Fe-2S] and [4Fe-4S] proteins. First, a [2Fe-2S] cluster is transiently assembled on the scaffold protein ISU1. In a second step, the cluster is released from ISU1, transferred to a glutaredoxin, followed by the formation of mitochondrial [2Fe-2S] proteins, the synthesis of [4Fe-4S] clusters and their target-specific insertion into the recipient apoproteins. Cluster assembly on ISU1 depends on the function of the cysteine desulfurase complex NFS1-ISD11, which serves as the sulfur donor for cluster synthesis, the iron-binding protein frataxin as the putative iron donor, and the electron transfer chain comprised of ferredoxin reductase and ferredoxin, which receive their electrons from NADH. This Eremothecium gossypii (strain ATCC 10895 / CBS 109.51 / FGSC 9923 / NRRL Y-1056) (Yeast) protein is Iron sulfur cluster assembly protein 1, mitochondrial (ISU1).